The chain runs to 499 residues: Probable cytosol aminopeptidase (499 aa).

Residues Lys-263 and Asp-268 each contribute to the Mn(2+) site. The active site involves Lys-275. 3 residues coordinate Mn(2+): Asp-286, Asp-345, and Glu-347. The active site involves Arg-349.

This sequence belongs to the peptidase M17 family. It depends on Mn(2+) as a cofactor.

The protein localises to the cytoplasm. It catalyses the reaction Release of an N-terminal amino acid, Xaa-|-Yaa-, in which Xaa is preferably Leu, but may be other amino acids including Pro although not Arg or Lys, and Yaa may be Pro. Amino acid amides and methyl esters are also readily hydrolyzed, but rates on arylamides are exceedingly low.. The catalysed reaction is Release of an N-terminal amino acid, preferentially leucine, but not glutamic or aspartic acids.. Functionally, presumably involved in the processing and regular turnover of intracellular proteins. Catalyzes the removal of unsubstituted N-terminal amino acids from various peptides. In Chlamydia muridarum (strain MoPn / Nigg), this protein is Probable cytosol aminopeptidase (pepA).